Consider the following 215-residue polypeptide: Elongation factor Ts (215 aa).

Residues 80–83 form an involved in Mg(2+) ion dislocation from EF-Tu region; that stretch reads TDFV.

This sequence belongs to the EF-Ts family.

It is found in the cytoplasm. Its function is as follows. Associates with the EF-Tu.GDP complex and induces the exchange of GDP to GTP. It remains bound to the aminoacyl-tRNA.EF-Tu.GTP complex up to the GTP hydrolysis stage on the ribosome. The protein is Elongation factor Ts of Heliobacterium modesticaldum (strain ATCC 51547 / Ice1).